The primary structure comprises 3418 residues: Breast cancer type 2 susceptibility protein (3418 aa).

The segment at 1–40 (MPIGSKERPTFFEIFKTRCNKADLGPISLNWFEELSSEAP) is interaction with PALB2. A disordered region spans residues 37 to 68 (SEAPPYNSEPAEESEHKNNNYEPNLFKTPQRK). Phosphoserine is present on S70. Residues 358-381 (VEPNDTDPLDSNVANQKPFESGSD) are disordered. Residues S445, S492, and S755 each carry the phosphoserine modification. The interval 639–1000 (LHSSVKRSCS…NKWAGLLGPI (362 aa)) is interaction with NPM1. BRCA2 repeat units follow at residues 1002 to 1036 (NHSF…DIEE), 1212 to 1246 (NEVG…DIEN), 1421 to 1455 (FETS…QKPE), 1517 to 1551 (KEPT…EKEQ), 1664 to 1698 (IENS…EGIF), and 1837 to 1871 (FEVG…DSFS). An interaction with RAD51 region spans residues 1003 to 2082 (HSFGGSFRTA…LHKVKGVLEE (1080 aa)). The segment at 1338-1781 (GSDSSKNDTV…IEPVLKNVED (444 aa)) is interaction with POLH. The interval 1410 to 1595 (TATKTEQNIK…TAAPKCKEMQ (186 aa)) is required for stimulation of POLH DNA polymerization activity. The residue at position 1970 (S1970) is a Phosphoserine. The BRCA2 7 repeat unit spans residues 1971 to 2005 (SANTCGIFSTASGKSVQVSDASLQNARQVFSEIED). T2035 carries the phosphothreonine modification. The BRCA2 8 repeat unit spans residues 2051–2085 (NSSAFSGFSTASGKQVSILESSLHKVKGVLEEFDL). S2095 bears the Phosphoserine mark. Positions 2270 to 2337 (GKRRGEPLIL…EPITCVPFRT (68 aa)) are interaction with HSF2BP. The interval 2350–2545 (TAPGQEFLSK…SHKQLYTYGV (196 aa)) is interaction with FANCD2. The segment at 2430-2450 (ENRQKQNIDGHGSDDSKNKIN) is disordered. The interaction with SEM1 stretch occupies residues 2481–2832 (ITSLQNARDI…QRAYPIQWME (352 aa)). The Nuclear export signal; masked by interaction with SEM1 signature appears at 2682–2698 (AAKTLVLCVSDIISLSA). S3291 carries the phosphoserine; by CDK1 and CDK2 modification. S3319 carries the post-translational modification Phosphoserine. The residue at position 3387 (T3387) is a Phosphothreonine; by CHEK1 and CHEK2. The disordered stretch occupies residues 3393-3418 (EQESSQASTEECEKNKQDTITTKKYI).

Monomer and dimer. Interacts with RAD51; regulates RAD51 recruitment and function at sites of DNA repair. Interacts with WDR16, USP11, DMC1, ROCK2 and NPM1. Interacts with SEM1; the interaction masks a nuclear export signal in BRCA2. Interacts with both nonubiquitinated and monoubiquitinated FANCD2; this complex also includes XRCC3 and phosphorylated FANCG. Part of a BRCA complex containing BRCA1, BRCA2 and PALB2. Component of the homologous recombination repair (HR) complex composed of ERCC5/XPG, BRCA2, PALB2, DSS1 and RAD51. Within the complex, interacts with ERCC5/XPG and PALB2. Interacts directly with PALB2 which may serve as a scaffold for a HR complex containing PALB2, BRCA2, RAD51C, RAD51 and XRCC3. Interacts with BRCA1 only in the presence of PALB2 which serves as the bridging protein. Interacts with POLH; the interaction is direct. Interacts with the TREX-2 complex subunits PCID2 and SEM1. Interacts with HSF2BP and BRME1; the interaction with HSF2BP is direct and allows the formation of a ternary complex. The complex BRME1:HSF2BP:BRCA2 interacts with SPATA22, MEIOB and RAD51. Phosphorylated by ATM upon irradiation-induced DNA damage. Phosphorylation by CHEK1 and CHEK2 regulates interaction with RAD51. Phosphorylation at Ser-3291 by CDK1 and CDK2 is low in S phase when recombination is active, but increases as cells progress towards mitosis; this phosphorylation prevents homologous recombination-dependent repair during S phase and G2 by inhibiting RAD51 binding. In terms of processing, ubiquitinated in the absence of DNA damage; this does not lead to proteasomal degradation. In contrast, ubiquitination in response to DNA damage leads to proteasomal degradation. Highest levels of expression in breast and thymus, with slightly lower levels in lung, ovary and spleen.

Its subcellular location is the nucleus. It is found in the cytoplasm. It localises to the cytoskeleton. The protein resides in the microtubule organizing center. The protein localises to the centrosome. Involved in double-strand break repair and/or homologous recombination. Binds RAD51 and potentiates recombinational DNA repair by promoting assembly of RAD51 onto single-stranded DNA (ssDNA). Acts by targeting RAD51 to ssDNA over double-stranded DNA, enabling RAD51 to displace replication protein-A (RPA) from ssDNA and stabilizing RAD51-ssDNA filaments by blocking ATP hydrolysis. Part of a PALB2-scaffolded HR complex containing RAD51C and which is thought to play a role in DNA repair by HR. May participate in S phase checkpoint activation. Binds selectively to ssDNA, and to ssDNA in tailed duplexes and replication fork structures. May play a role in the extension step after strand invasion at replication-dependent DNA double-strand breaks; together with PALB2 is involved in both POLH localization at collapsed replication forks and DNA polymerization activity. In concert with NPM1, regulates centrosome duplication. Interacts with the TREX-2 complex (transcription and export complex 2) subunits PCID2 and SEM1, and is required to prevent R-loop-associated DNA damage and thus transcription-associated genomic instability. Silencing of BRCA2 promotes R-loop accumulation at actively transcribed genes in replicating and non-replicating cells, suggesting that BRCA2 mediates the control of R-loop associated genomic instability, independently of its known role in homologous recombination. This Homo sapiens (Human) protein is Breast cancer type 2 susceptibility protein.